The following is a 181-amino-acid chain: Ribulose bisphosphate carboxylase small subunit, chloroplastic (181 aa).

The N-terminal 54 residues, 1–54 (MASSMLSSAAVVTSQLQATMVAPFTGLKSSAAFPVTRKTNTDITSIASNGGRVS), are a transit peptide targeting the chloroplast.

This sequence belongs to the RuBisCO small chain family. Heterohexadecamer of 8 large and 8 small subunits.

Its subcellular location is the plastid. It is found in the chloroplast. Functionally, ruBisCO catalyzes two reactions: the carboxylation of D-ribulose 1,5-bisphosphate, the primary event in carbon dioxide fixation, as well as the oxidative fragmentation of the pentose substrate. Both reactions occur simultaneously and in competition at the same active site. Although the small subunit is not catalytic it is essential for maximal activity. This chain is Ribulose bisphosphate carboxylase small subunit, chloroplastic, found in Raphanus sativus (Radish).